A 129-amino-acid polypeptide reads, in one-letter code: Lysozyme C (129 aa).

A C-type lysozyme domain is found at 1–129; it reads KVYGRCELAA…VHAWIRGCRL (129 aa). 4 disulfide bridges follow: Cys-6–Cys-127, Cys-30–Cys-115, Cys-64–Cys-80, and Cys-76–Cys-94. Active-site residues include Glu-35 and Asp-52.

The protein belongs to the glycosyl hydrolase 22 family. Monomer.

The protein localises to the secreted. The catalysed reaction is Hydrolysis of (1-&gt;4)-beta-linkages between N-acetylmuramic acid and N-acetyl-D-glucosamine residues in a peptidoglycan and between N-acetyl-D-glucosamine residues in chitodextrins.. Functionally, lysozymes have primarily a bacteriolytic function; those in tissues and body fluids are associated with the monocyte-macrophage system and enhance the activity of immunoagents. The protein is Lysozyme C (LYZ) of Tragopan temminckii (Temminck's tragopan).